The sequence spans 1375 residues: DNA-directed RNA polymerase subunit beta (1375 aa).

It belongs to the RNA polymerase beta chain family. The RNAP catalytic core consists of 2 alpha, 1 beta, 1 beta' and 1 omega subunit. When a sigma factor is associated with the core the holoenzyme is formed, which can initiate transcription.

It carries out the reaction RNA(n) + a ribonucleoside 5'-triphosphate = RNA(n+1) + diphosphate. In terms of biological role, DNA-dependent RNA polymerase catalyzes the transcription of DNA into RNA using the four ribonucleoside triphosphates as substrates. In Coxiella burnetii (strain Dugway 5J108-111), this protein is DNA-directed RNA polymerase subunit beta.